Consider the following 232-residue polypeptide: Putative membrane protein ORF8 (232 aa).

Over residues 71 to 84 the composition is skewed to low complexity; the sequence is GSSAASIPSAPTPD. The segment at 71–121 is disordered; that stretch reads GSSAASIPSAPTPDATRESPTGEPHRDRALSTETPTPEPSRDGGSTPEVLH. The next 2 membrane-spanning stretches (helical) occupy residues 166-182 and 195-211; these read VFAR…GSVA and LVVT…WVIV.

Its subcellular location is the membrane. This is Putative membrane protein ORF8 (ORF8) from Ictalurid herpesvirus 1 (strain Auburn) (IcHV-1).